The primary structure comprises 415 residues: Multidrug resistance protein MdtA (415 aa).

Residues 1-21 form the signal peptide; that stretch reads MKGSYKSRWVIVIVVVIAAIA. 2 disordered regions span residues 32–56 and 392–415; these read SRSA…GMRA and EAQS…GARS. Basic and acidic residues predominate over residues 399–415; sequence SEEKATSREYAKKGARS.

It belongs to the membrane fusion protein (MFP) (TC 8.A.1) family. In terms of assembly, part of a tripartite efflux system composed of MdtA, MdtB and MdtC.

The protein localises to the cell inner membrane. In terms of biological role, the MdtABC tripartite complex confers resistance against novobiocin and deoxycholate. The chain is Multidrug resistance protein MdtA from Escherichia coli O7:K1 (strain IAI39 / ExPEC).